A 232-amino-acid chain; its full sequence is BTB/POZ domain-containing protein KCTD11 (232 aa).

The region spanning 1-49 is the BTB domain; it reads MLGAMFRAGTPMPPNLNSQGGGHYFIDRDGKAFRHILNFLRLGRLDLPR.

In terms of assembly, homopentamer. Interacts with KCTD6 and KCTD21; KCTD11 and KCTD6 or KCTD21 may associate in pentameric assemblies. Component of the BCR(KCTD11) E3 ubiquitin ligase complex, at least composed of CUL3 and KCTD11 and RBX1. Interacts (via BTB domain) with CUL3; initially a 4:4 stoichiometry has been reported, however, electron microscopy revealed pentameric states of the BTB domain. Higher expression in cerebellum than in whole brain and lower expression in medulloblastoma.

It participates in protein modification; protein ubiquitination. Functionally, plays a role as a marker and a regulator of neuronal differentiation; Up-regulated by a variety of neurogenic signals, such as retinoic acid, epidermal growth factor/EGF and NGFB/nerve growth factor. Induces apoptosis, growth arrest and the expression of cyclin-dependent kinase inhibitor CDKN1B. Plays a role as a tumor repressor and inhibits cell growth and tumorigenicity of medulloblastoma (MDB). Acts as a probable substrate-specific adapter for a BCR (BTB-CUL3-RBX1) E3 ubiquitin-protein ligase complex towards HDAC1. Functions as antagonist of the Hedgehog pathway on cell proliferation and differentiation by affecting the nuclear transfer of transcription factor GLI1, thus maintaining cerebellar granule cells in undifferentiated state, this effect probably occurs via HDAC1 down-regulation, keeping GLI1 acetylated and inactive. When knock-down, Hedgehog antagonism is impaired and proliferation of granule cells is sustained. Activates the caspase cascade. This Homo sapiens (Human) protein is BTB/POZ domain-containing protein KCTD11 (KCTD11).